The chain runs to 347 residues: NADH-ubiquinone oxidoreductase chain 2 (347 aa).

Helical transmembrane passes span M1–V21, H25–M45, Y59–M79, T96–P116, I122–L142, I149–G169, I178–P198, L200–I220, M237–L257, D274–M294, and L325–I345.

The protein belongs to the complex I subunit 2 family. Core subunit of respiratory chain NADH dehydrogenase (Complex I) which is composed of 45 different subunits. Interacts with TMEM242.

It is found in the mitochondrion inner membrane. The enzyme catalyses a ubiquinone + NADH + 5 H(+)(in) = a ubiquinol + NAD(+) + 4 H(+)(out). Its function is as follows. Core subunit of the mitochondrial membrane respiratory chain NADH dehydrogenase (Complex I) which catalyzes electron transfer from NADH through the respiratory chain, using ubiquinone as an electron acceptor. Essential for the catalytic activity and assembly of complex I. This Balaenoptera physalus (Fin whale) protein is NADH-ubiquinone oxidoreductase chain 2.